Reading from the N-terminus, the 604-residue chain is Polycomb group protein EMF2B (604 aa).

A C2H2-type zinc finger spans residues 310 to 331 (CPFCLVPCGSFKGLGCHLNASH). The interval 396–440 (PHIVDSGSPEDAQAGSEDDYVQRENGSSVAHASVDPANSLHGSNL) is disordered. Residues 454-589 (LSVERADPRN…DARAMNACNT (136 aa)) form a VEFS-box region.

This sequence belongs to the VEFS (VRN2-EMF2-FIS2-SU(Z)12) family. In terms of assembly, component of the polycomb repressive complex 2 (PRC2), composed of the core PRC2 components FIE2, EZ1 and CLF. PRC2 methylates 'Lys-27' residues of histone H3 (H3K27me3), leading to transcriptional repression of the affected target gene. Widely expressed.

Polycomb group (PcG) protein. PcG proteins act by forming multiprotein complexes, which are required to maintain the transcriptionally repressive state of homeotic genes throughout development. PcG proteins are not required to initiate repression, but to maintain it during later stages of development. They act via the methylation of histones, rendering chromatin heritably changed in its expressibility. Polycomb group (PcG) protein involved in the repression of flowering under long day (LD) conditions. Regulates floret development. In Oryza sativa subsp. japonica (Rice), this protein is Polycomb group protein EMF2B.